The following is a 59-amino-acid chain: Single-pass membrane and coiled-coil domain-containing protein 4 (59 aa).

A disordered region spans residues 1–23 (MRQLKGKPKKETSKDKKERKQAM). Residues 9–22 (KKETSKDKKERKQA) show a composition bias toward basic and acidic residues. Positions 9–31 (KKETSKDKKERKQAMQEARQQIT) form a coiled coil. Residues 32–52 (TVVLPTLAVVVLLIVVFVYVA) form a helical membrane-spanning segment.

Belongs to the SMCO4 family.

It is found in the membrane. The protein is Single-pass membrane and coiled-coil domain-containing protein 4 (SMCO4) of Homo sapiens (Human).